Here is a 444-residue protein sequence, read N- to C-terminus: Adenylosuccinate synthetase (444 aa).

Residues 19-25 and 47-49 each bind GTP; these read GDEGKGK and GHT. Aspartate 20 functions as the Proton acceptor in the catalytic mechanism. Mg(2+)-binding residues include aspartate 20 and glycine 47. IMP is bound by residues 20-23, 45-48, threonine 139, arginine 153, glutamine 234, threonine 249, and arginine 317; these read DEGK and NAGH. The active-site Proton donor is histidine 48. 313–319 contacts substrate; the sequence is TVTGRPR. GTP is bound by residues arginine 319, 345–347, and 427–429; these read KLD and STG.

It belongs to the adenylosuccinate synthetase family. As to quaternary structure, homodimer. Mg(2+) is required as a cofactor.

It is found in the cytoplasm. It carries out the reaction IMP + L-aspartate + GTP = N(6)-(1,2-dicarboxyethyl)-AMP + GDP + phosphate + 2 H(+). Its pathway is purine metabolism; AMP biosynthesis via de novo pathway; AMP from IMP: step 1/2. In terms of biological role, plays an important role in the de novo pathway of purine nucleotide biosynthesis. Catalyzes the first committed step in the biosynthesis of AMP from IMP. The protein is Adenylosuccinate synthetase of Methylibium petroleiphilum (strain ATCC BAA-1232 / LMG 22953 / PM1).